The chain runs to 433 residues: Enolase (433 aa).

Glutamine 167 serves as a coordination point for (2R)-2-phosphoglycerate. Glutamate 209 functions as the Proton donor in the catalytic mechanism. Mg(2+) contacts are provided by aspartate 246, glutamate 291, and aspartate 318. (2R)-2-phosphoglycerate-binding residues include lysine 343, arginine 372, serine 373, and lysine 394. The Proton acceptor role is filled by lysine 343.

This sequence belongs to the enolase family. Component of the RNA degradosome, a multiprotein complex involved in RNA processing and mRNA degradation. Mg(2+) is required as a cofactor.

It localises to the cytoplasm. The protein resides in the secreted. The protein localises to the cell surface. It catalyses the reaction (2R)-2-phosphoglycerate = phosphoenolpyruvate + H2O. It participates in carbohydrate degradation; glycolysis; pyruvate from D-glyceraldehyde 3-phosphate: step 4/5. Functionally, catalyzes the reversible conversion of 2-phosphoglycerate (2-PG) into phosphoenolpyruvate (PEP). It is essential for the degradation of carbohydrates via glycolysis. The chain is Enolase from Haemophilus ducreyi (strain 35000HP / ATCC 700724).